Consider the following 90-residue polypeptide: Probable Fe(2+)-trafficking protein (90 aa).

It belongs to the Fe(2+)-trafficking protein family.

In terms of biological role, could be a mediator in iron transactions between iron acquisition and iron-requiring processes, such as synthesis and/or repair of Fe-S clusters in biosynthetic enzymes. The protein is Probable Fe(2+)-trafficking protein of Pseudomonas fluorescens (strain Pf0-1).